The following is a 252-amino-acid chain: tRNA (guanine-N(1)-)-methyltransferase (252 aa).

Residues Gly113 and 133–138 contribute to the S-adenosyl-L-methionine site; that span reads VGDFVL.

The protein belongs to the RNA methyltransferase TrmD family. Homodimer.

The protein localises to the cytoplasm. It catalyses the reaction guanosine(37) in tRNA + S-adenosyl-L-methionine = N(1)-methylguanosine(37) in tRNA + S-adenosyl-L-homocysteine + H(+). Functionally, specifically methylates guanosine-37 in various tRNAs. The sequence is that of tRNA (guanine-N(1)-)-methyltransferase from Francisella tularensis subsp. holarctica (strain FTNF002-00 / FTA).